Here is a 1427-residue protein sequence, read N- to C-terminus: Tonsoku-like protein (1427 aa).

A disordered region spans residues 1 to 21; that stretch reads MTSTKEIKQLQKAKSKAQSSN. The segment covering 10–21 has biased composition (low complexity); the sequence is LQKAKSKAQSSN. 8 TPR repeats span residues 27–60, 67–100, 107–147, 162–195, 202–235, 242–275, 311–344, and 352–385; these read ASLC…SEIL, AVAN…ARSV, QRAL…VDER, ARLL…AEKN, YRAN…ARKM, SECF…GSQQ, LDLS…AEAL, and AVIH…RKGN. The tract at residues 465-502 is disordered; the sequence is LSLDQSEDEDEEDEVDNSEPLEDSDIQYSESDDEDLEG. The span at 469-501 shows a compositional bias: acidic residues; sequence QSEDEDEEDEVDNSEPLEDSDIQYSESDDEDLE. 3 ANK repeats span residues 522–551, 555–584, and 591–620; these read KGET…PVNV, CGWT…NVND, and GGIT…SVTV. Disordered stretches follow at residues 692–801, 865–922, and 941–961; these read PLLR…SESG, KKKR…KMNQ, and IMTQ…QAMP. The segment covering 742–761 has biased composition (low complexity); sequence DDSSSSDNPDSDCSLSPLRP. Residues 773-783 show a composition bias toward polar residues; sequence SPQEVPSSQEL. The segment covering 871 to 880 has biased composition (basic and acidic residues); the sequence is SEHNATRETT. The span at 881–890 shows a compositional bias: polar residues; sequence SRSQNNSSTI. Low complexity predominate over residues 899–910; sequence SCSSRGSLSLKK. 7 LRR repeats span residues 1113 to 1137, 1141 to 1168, 1174 to 1197, 1234 to 1258, 1293 to 1316, 1321 to 1346, and 1377 to 1400; these read QASL…MMAA, MPRL…AFET, FPCL…ALAS, TGNM…VLKT, DCPL…LLAR, CPSL…LLNG, and SDHI…ALQQ.

This sequence belongs to the Tonsoku family. In terms of assembly, component of the MMS22L-TONSL complex. Binds histones, with a strong preference for histone H3.1 (histones H3.1 and H3-4/H3.1t).

The protein resides in the nucleus. It is found in the chromosome. It localises to the cytoplasm. Its function is as follows. Component of the MMS22L-TONSL complex, a complex that promotes homologous recombination-mediated repair of double-strand breaks (DSBs) at stalled or collapsed replication forks. The MMS22L-TONSL complex is required to maintain genome integrity during DNA replication. It mediates the assembly of RAD51 filaments on single-stranded DNA (ssDNA): the MMS22L-TONSL complex is recruited to DSBs following histone replacement by histone chaperones and eviction of the replication protein A complex (RPA/RP-A) from DSBs. Following recruitment to DSBs, the TONSL-MMS22L complex promotes recruitment of RAD51 filaments and subsequent homologous recombination. Within the complex, TONSL acts as a histone reader, which recognizes and binds newly synthesized histones following their replacement by histone chaperones. The polypeptide is Tonsoku-like protein (tonsl) (Danio rerio (Zebrafish)).